A 442-amino-acid polypeptide reads, in one-letter code: Protein translocase subunit SecY (442 aa).

10 consecutive transmembrane segments (helical) span residues 24–44, 76–96, 125–145, 149–169, 178–198, 212–232, 269–289, 312–332, 363–383, and 385–405; these read FLFL…PGIN, IFAL…LMTA, VLAL…GVAF, FGFY…MMWL, VGNG…PRAI, IFAL…VVFI, VIPA…GSWF, NILL…ALMF, GVLT…CLLP, and FLVV…LIVV.

Belongs to the SecY/SEC61-alpha family. In terms of assembly, component of the Sec protein translocase complex. Heterotrimer consisting of SecY, SecE and SecG subunits. The heterotrimers can form oligomers, although 1 heterotrimer is thought to be able to translocate proteins. Interacts with the ribosome. Interacts with SecDF, and other proteins may be involved. Interacts with SecA.

It is found in the cell inner membrane. In terms of biological role, the central subunit of the protein translocation channel SecYEG. Consists of two halves formed by TMs 1-5 and 6-10. These two domains form a lateral gate at the front which open onto the bilayer between TMs 2 and 7, and are clamped together by SecE at the back. The channel is closed by both a pore ring composed of hydrophobic SecY resides and a short helix (helix 2A) on the extracellular side of the membrane which forms a plug. The plug probably moves laterally to allow the channel to open. The ring and the pore may move independently. This Pseudomonas aeruginosa (strain ATCC 15692 / DSM 22644 / CIP 104116 / JCM 14847 / LMG 12228 / 1C / PRS 101 / PAO1) protein is Protein translocase subunit SecY.